Reading from the N-terminus, the 163-residue chain is Nucleotide-binding protein syc0675_c (163 aa).

It belongs to the YajQ family.

Its function is as follows. Nucleotide-binding protein. The protein is Nucleotide-binding protein syc0675_c of Synechococcus sp. (strain ATCC 27144 / PCC 6301 / SAUG 1402/1) (Anacystis nidulans).